The sequence spans 439 residues: UPF0489 protein C5orf22 homolog (439 aa).

The interval 163 to 219 is disordered; it reads TTKLENGQSGAKIPKAAQTQDDMQSKADTPCTSSSQPPDGSAASGNISETAKKKADD. Positions 179–211 are enriched in polar residues; that stretch reads AQTQDDMQSKADTPCTSSSQPPDGSAASGNISE.

This sequence belongs to the UPF0489 family.

The chain is UPF0489 protein C5orf22 homolog from Danio rerio (Zebrafish).